Here is a 240-residue protein sequence, read N- to C-terminus: Probable phosphatase Athe_0620 (240 aa).

The Zn(2+) site is built by histidine 8, histidine 10, histidine 16, histidine 41, glutamate 74, histidine 102, histidine 132, aspartate 192, and histidine 194.

Belongs to the PHP family. Requires Zn(2+) as cofactor.

In Caldicellulosiruptor bescii (strain ATCC BAA-1888 / DSM 6725 / KCTC 15123 / Z-1320) (Anaerocellum thermophilum), this protein is Probable phosphatase Athe_0620.